The primary structure comprises 245 residues: MAALSCLLDSVRRDIKKVDRELRQLRCIDEISSRCLCDLYMHPYCCCDLHPYPYCLCYSKRSRSCGLCDLYYPCCLCDYKLYCLRPSLRSLERLRRTTNRILASSCCSSNILGSVNVCGFEPDQVKVRVKDGKVCVSAERENRYDCLGSKKYSYMNICKEFSLPPCVDEKDVTYSYGLGSCVKIESPCYPCTSPCNPCNPCSPCSPCGPCGPCGPCGPCGPCGPCDPCNPCYPCGSRFSCRKMIL.

Ser5 and Ser10 each carry phosphoserine. Repeat unit 1 spans residues Arg34–Asp38. The interval Arg34 to Asp78 is 2 X 5 AA repeats of [RC]-C-L-C-D. Position 64 is a phosphoserine (Ser64). The stretch at Cys74–Asp78 is repeat 2. Phosphoserine is present on residues Ser87, Ser108, Ser109, Ser137, Ser153, Ser175, and Ser180. Residues Cys195 to Pro233 are C-X-P repeat region.

Interacts (via leucine zipper motif) with TCP11. Interacts with SPAG4. Interacts with KLC3. Interacts with CCDC42. In terms of tissue distribution, testis. Specifically located to the round spermatid layer and to the luminally-oriented cytoplasm of elongated spermatids.

It is found in the cell projection. The protein localises to the cilium. The protein resides in the flagellum. It localises to the cytoplasm. Its subcellular location is the cytoskeleton. It is found in the microtubule organizing center. The protein localises to the centrosome. Its function is as follows. Component of the outer dense fibers (ODF) of spermatozoa. ODF are filamentous structures located on the outside of the axoneme in the midpiece and principal piece of the mammalian sperm tail and may help to maintain the passive elastic structures and elastic recoil of the sperm tail. This Rattus norvegicus (Rat) protein is Outer dense fiber protein 1 (Odf1).